The sequence spans 253 residues: Triosephosphate isomerase (253 aa).

9 to 11 (NWK) contacts substrate. H97 acts as the Electrophile in catalysis. Residue E169 is the Proton acceptor of the active site. Substrate is bound by residues G175, S215, and 236–237 (GG).

This sequence belongs to the triosephosphate isomerase family. In terms of assembly, homodimer.

The protein resides in the cytoplasm. It catalyses the reaction D-glyceraldehyde 3-phosphate = dihydroxyacetone phosphate. It participates in carbohydrate biosynthesis; gluconeogenesis. The protein operates within carbohydrate degradation; glycolysis; D-glyceraldehyde 3-phosphate from glycerone phosphate: step 1/1. In terms of biological role, involved in the gluconeogenesis. Catalyzes stereospecifically the conversion of dihydroxyacetone phosphate (DHAP) to D-glyceraldehyde-3-phosphate (G3P). The sequence is that of Triosephosphate isomerase from Staphylococcus haemolyticus (strain JCSC1435).